The sequence spans 384 residues: Beta-glucuronosyltransferase GlcAT14C (384 aa).

Topologically, residues 1–11 (MKRSHISSPRS) are cytoplasmic. The signal-anchor for type II membrane protein transmembrane segment at 12–34 (YSRPAISIFGVFLLFLLVLTLSS) threads the bilayer. The Lumenal segment spans residues 35 to 384 (RKPSDSSSGL…HENFRAKQCK (350 aa)). Residues N156, N285, and N306 are each glycosylated (N-linked (GlcNAc...) asparagine).

This sequence belongs to the glycosyltransferase 14 family.

Its subcellular location is the golgi apparatus membrane. In terms of biological role, beta-glucuronosyltransferase involved in the biosynthesis of type II arabinogalactan (AG). Modifies both the beta-1,6-linked galactan and beta-1,3-linked galactan present in type II AG. This chain is Beta-glucuronosyltransferase GlcAT14C, found in Arabidopsis thaliana (Mouse-ear cress).